The primary structure comprises 269 residues: Tryptophan synthase alpha chain (269 aa).

Catalysis depends on proton acceptor residues E49 and D60.

The protein belongs to the TrpA family. In terms of assembly, tetramer of two alpha and two beta chains.

The enzyme catalyses (1S,2R)-1-C-(indol-3-yl)glycerol 3-phosphate + L-serine = D-glyceraldehyde 3-phosphate + L-tryptophan + H2O. The protein operates within amino-acid biosynthesis; L-tryptophan biosynthesis; L-tryptophan from chorismate: step 5/5. In terms of biological role, the alpha subunit is responsible for the aldol cleavage of indoleglycerol phosphate to indole and glyceraldehyde 3-phosphate. In Histophilus somni (strain 2336) (Haemophilus somnus), this protein is Tryptophan synthase alpha chain.